Here is a 390-residue protein sequence, read N- to C-terminus: Formate-dependent phosphoribosylglycinamide formyltransferase (390 aa).

N(1)-(5-phospho-beta-D-ribosyl)glycinamide-binding positions include 18 to 19 and E78; that span reads EL. Residues R110, K151, 156–161, 191–194, and E199 contribute to the ATP site; these read SSGKGQ and EEFL. Positions 115-305 constitute an ATP-grasp domain; that stretch reads DLASKELNIK…EFELHLRAFL (191 aa). Residues E264 and E276 each contribute to the Mg(2+) site. N(1)-(5-phospho-beta-D-ribosyl)glycinamide contacts are provided by residues D283, K353, and 360–361; that span reads RR.

This sequence belongs to the PurK/PurT family. Homodimer.

It carries out the reaction N(1)-(5-phospho-beta-D-ribosyl)glycinamide + formate + ATP = N(2)-formyl-N(1)-(5-phospho-beta-D-ribosyl)glycinamide + ADP + phosphate + H(+). The protein operates within purine metabolism; IMP biosynthesis via de novo pathway; N(2)-formyl-N(1)-(5-phospho-D-ribosyl)glycinamide from N(1)-(5-phospho-D-ribosyl)glycinamide (formate route): step 1/1. Involved in the de novo purine biosynthesis. Catalyzes the transfer of formate to 5-phospho-ribosyl-glycinamide (GAR), producing 5-phospho-ribosyl-N-formylglycinamide (FGAR). Formate is provided by PurU via hydrolysis of 10-formyl-tetrahydrofolate. This chain is Formate-dependent phosphoribosylglycinamide formyltransferase, found in Prochlorococcus marinus subsp. pastoris (strain CCMP1986 / NIES-2087 / MED4).